A 489-amino-acid polypeptide reads, in one-letter code: tRNA(Ile)-lysidine synthase (489 aa).

35 to 40 (SGGLDS) serves as a coordination point for ATP.

This sequence belongs to the tRNA(Ile)-lysidine synthase family.

The protein resides in the cytoplasm. It catalyses the reaction cytidine(34) in tRNA(Ile2) + L-lysine + ATP = lysidine(34) in tRNA(Ile2) + AMP + diphosphate + H(+). In terms of biological role, ligates lysine onto the cytidine present at position 34 of the AUA codon-specific tRNA(Ile) that contains the anticodon CAU, in an ATP-dependent manner. Cytidine is converted to lysidine, thus changing the amino acid specificity of the tRNA from methionine to isoleucine. The protein is tRNA(Ile)-lysidine synthase of Burkholderia pseudomallei (strain K96243).